The following is a 258-amino-acid chain: uncharacterized protein (258 aa).

3 N-linked (GlcNAc...) asparagine; by host glycosylation sites follow: N60, N104, and N113. The span at 147-156 (TTRKPGQKTT) shows a compositional bias: low complexity. Residues 147–183 (TTRKPGQKTTLSRLKTTPNKHTQHKRSTRRTSPRDYN) form a disordered region. Positions 157-166 (LSRLKTTPNK) are enriched in polar residues. A compositionally biased stretch (basic residues) spans 167 to 177 (HTQHKRSTRRT). N183 carries N-linked (GlcNAc...) asparagine; by host glycosylation. Residues 208-228 (AHSAWILIVIIIIIVVILFFF) form a helical membrane-spanning segment.

This sequence belongs to the RL11 family.

The protein resides in the membrane. This is an uncharacterized protein from Human cytomegalovirus (strain AD169) (HHV-5).